The sequence spans 231 residues: 26S proteasome non-ATPase regulatory subunit 10 (231 aa).

ANK repeat units follow at residues 3 to 36, 37 to 69, 70 to 102, 103 to 135, 136 to 168, 169 to 201, and 202 to 226; these read GCVS…ATRT, DQDS…VNEK, DDAG…VNAV, NQNG…PDAK, NHYD…TNIQ, DTEG…IYIE, and NKEE…IAES.

As to quaternary structure, part of transient complex containing PSMD10, PSMC4, PSMC5 and PAAF1 formed during the assembly of the 26S proteasome. Stays associated throughout the assembly of the PA700/19S RC and is released upon association with the 20S core. Interacts with PSMC4. Interacts with RB1. Interacts with CDK4. Interacts with MDM2. Interacts with RELA. Associates with a CDK4:CCND2 serine/threonine kinase complex. Interacts with ARHGDIA and increases the interaction between ARHGDIA and RHOA, hence promotes ARHGDIA inactivation of RHOA and ROCK.

It localises to the cytoplasm. It is found in the nucleus. Acts as a chaperone during the assembly of the 26S proteasome, specifically of the PA700/19S regulatory complex (RC). In the initial step of the base subcomplex assembly is part of an intermediate PSMD10:PSMC4:PSMC5:PAAF1 module which probably assembles with a PSMD5:PSMC2:PSMC1:PSMD2 module. Independently of the proteasome, regulates EGF-induced AKT activation through inhibition of the RHOA/ROCK/PTEN pathway, leading to prolonged AKT activation. Plays an important role in RAS-induced tumorigenesis. In terms of biological role, acts as an oncoprotein by being involved in negative regulation of tumor suppressors RB1 and p53/TP53. Overexpression is leading to phosphorylation of RB1 and proteasomal degradation of RB1. Regulates CDK4-mediated phosphorylation of RB1 by competing with CDKN2A for binding with CDK4. Facilitates binding of MDM2 to p53/TP53 and the mono- and polyubiquitination of p53/TP53 by MDM2 suggesting a function in targeting the TP53:MDM2 complex to the 26S proteasome. Involved in p53-independent apoptosis. Involved in regulation of NF-kappa-B by retaining it in the cytoplasm. Binds to the NF-kappa-B component RELA and accelerates its XPO1/CRM1-mediated nuclear export. This is 26S proteasome non-ATPase regulatory subunit 10 (Psmd10) from Rattus norvegicus (Rat).